Reading from the N-terminus, the 650-residue chain is Chaperone protein DnaK (650 aa).

At threonine 200 the chain carries Phosphothreonine; by autocatalysis.

The protein belongs to the heat shock protein 70 family.

Functionally, acts as a chaperone. The protein is Chaperone protein DnaK of Paraburkholderia phytofirmans (strain DSM 17436 / LMG 22146 / PsJN) (Burkholderia phytofirmans).